Consider the following 218-residue polypeptide: UPF0598 protein C8orf82 homolog (218 aa).

The protein belongs to the UPF0598 family.

The sequence is that of UPF0598 protein C8orf82 homolog from Rattus norvegicus (Rat).